The sequence spans 350 residues: Protein-glutamate methylesterase/protein-glutamine glutaminase (350 aa).

Positions 5–122 (KVLCVDDSAL…RDGLIEYSEV (118 aa)) constitute a Response regulatory domain. Asp-56 is modified (4-aspartylphosphate). A CheB-type methylesterase domain is found at 152 to 346 (PFASSEKLVI…ERILTRLGDR (195 aa)). Catalysis depends on residues Ser-165, His-191, and Asp-288.

The protein belongs to the CheB family. Post-translationally, phosphorylated by CheA. Phosphorylation of the N-terminal regulatory domain activates the methylesterase activity.

The protein localises to the cytoplasm. The catalysed reaction is [protein]-L-glutamate 5-O-methyl ester + H2O = L-glutamyl-[protein] + methanol + H(+). It catalyses the reaction L-glutaminyl-[protein] + H2O = L-glutamyl-[protein] + NH4(+). Its function is as follows. Involved in chemotaxis. Part of a chemotaxis signal transduction system that modulates chemotaxis in response to various stimuli. Catalyzes the demethylation of specific methylglutamate residues introduced into the chemoreceptors (methyl-accepting chemotaxis proteins or MCP) by CheR. Also mediates the irreversible deamidation of specific glutamine residues to glutamic acid. In Bordetella parapertussis (strain 12822 / ATCC BAA-587 / NCTC 13253), this protein is Protein-glutamate methylesterase/protein-glutamine glutaminase.